The sequence spans 207 residues: Large ribosomal subunit protein uL4 (207 aa).

The disordered stretch occupies residues 44-85 (MRQGTHKTKNRAEVSGGGRKPWRQKGTGRARQGSIRSPQWRG).

The protein belongs to the universal ribosomal protein uL4 family. Part of the 50S ribosomal subunit.

In terms of biological role, one of the primary rRNA binding proteins, this protein initially binds near the 5'-end of the 23S rRNA. It is important during the early stages of 50S assembly. It makes multiple contacts with different domains of the 23S rRNA in the assembled 50S subunit and ribosome. Forms part of the polypeptide exit tunnel. This Geobacillus thermodenitrificans (strain NG80-2) protein is Large ribosomal subunit protein uL4.